Here is a 133-residue protein sequence, read N- to C-terminus: Heat shock protein 15 (133 aa).

An S4 RNA-binding domain is found at 9 to 71 (VRLDKWLWAA…DERTVIVKAI (63 aa)). Positions 105-133 (NALTMPHPDRRPDKKERRDLLRFKHGDSE) are disordered. Residues 111–133 (HPDRRPDKKERRDLLRFKHGDSE) show a composition bias toward basic and acidic residues.

Belongs to the HSP15 family. In terms of assembly, monomer.

Its function is as follows. Involved in the recycling of free 50S ribosomal subunits that still carry a nascent chain. Binds RNA more specifically than DNA. Binds with very high affinity to the free 50S ribosomal subunit. Does not bind it when it is part of the 70S ribosome. The chain is Heat shock protein 15 (hslR) from Escherichia coli O157:H7.